Here is a 98-residue protein sequence, read N- to C-terminus: Protein E7 (98 aa).

An E7 terminal domain region spans residues 1–37 (MKGQDVTLKNVAVELEDVVSPIILDCEEEIETEEVDC). The LXCXE motif; interaction with host RB1 and TMEM173/STING signature appears at 24–28 (LDCEE). A zinc finger spans residues 47–83 (CYVCENPLRLALVSSPDGIHQLHQLLLDCISLLCANC). Positions 65–73 (IHQLHQLLL) match the Nuclear export signal motif.

The protein belongs to the papillomaviridae E7 protein family. Homodimer. Homooligomer. Interacts with host RB1; this interaction induces dissociation of RB1-E2F1 complex thereby disrupting RB1 activity. Interacts with host EP300; this interaction represses EP300 transcriptional activity. Interacts with protein E2; this interaction inhibits E7 oncogenic activity. Interacts with host TMEM173/STING; this interaction impairs the ability of TMEM173/STING to sense cytosolic DNA and promote the production of type I interferon (IFN-alpha and IFN-beta). Highly phosphorylated.

Its subcellular location is the host cytoplasm. The protein resides in the host nucleus. Its function is as follows. Plays a role in viral genome replication by driving entry of quiescent cells into the cell cycle. Stimulation of progression from G1 to S phase allows the virus to efficiently use the cellular DNA replicating machinery to achieve viral genome replication. E7 protein has both transforming and trans-activating activities. Induces the disassembly of the E2F1 transcription factor from RB1, with subsequent transcriptional activation of E2F1-regulated S-phase genes. Interferes with host histone deacetylation mediated by HDAC1 and HDAC2, leading to transcription activation. Also plays a role in the inhibition of both antiviral and antiproliferative functions of host interferon alpha. Interaction with host TMEM173/STING impairs the ability of TMEM173/STING to sense cytosolic DNA and promote the production of type I interferon (IFN-alpha and IFN-beta). In Bovine papillomavirus type 3, this protein is Protein E7.